A 614-amino-acid chain; its full sequence is Vitamin B12 transporter BtuB (614 aa).

The N-terminal stretch at 1 to 20 is a signal peptide; sequence MIKKASLLTACSVTAFSAWA. The TonB box signature appears at 26-33; it reads DTLVVTAI. The TBDR plug domain occupies 38–152; that stretch reads PRSTVLAPTT…IGGVVNIITT (115 aa). Cyanocob(III)alamin contacts are provided by residues Leu83, Ser85, Asn92, and 110-111; that span reads VS. The region spanning 155 to 614 is the TBDR beta-barrel domain; sequence EPGTEISAGW…EYTLSGSYTF (460 aa). 3 beta stranded membrane-spanning segments follow: residues 158-165, 169-178, and 184-195; these read TEISAGWG, YQNYDVSTQQ, and TRVTLLGDYAHT. 4 residues coordinate Ca(2+): Asp199, Gln211, Asp213, and Asp215. 2 consecutive transmembrane segments (beta stranded) span residues 217–227 and 232–248; these read FLSKTLYGALE and DAWS…NRTN. Tyr249 and Asp250 together coordinate Ca(2+). Cyanocob(III)alamin is bound at residue Ala251. Asp261 lines the Ca(2+) pocket. The next 14 membrane-spanning stretches (beta stranded) occupy residues 263 to 277, 279 to 296, 309 to 325, 328 to 337, 353 to 369, 371 to 381, 385 to 400, 403 to 417, 434 to 443, 449 to 458, 473 to 490, 494 to 509, 517 to 529, and 535 to 550; these read RKLY…LRYN, ELIK…KDYN, TLDE…NNVI, HGSIGAGVDW, YDQR…QQVG, FTFEGAARSDD, FGRH…WEFI, YRFI…KAPN, KSKQWEGAFE, VNWRISGYRN, YYNE…TANF, PLTH…ARNA, RRAK…QLDW, and DWGI…YDKD. Thr309 contacts cyanocob(III)alamin. Residue Arg517 coordinates cyanocob(III)alamin. Tyr551 provides a ligand contact to cyanocob(III)alamin. 3 beta stranded membrane-spanning segments follow: residues 558–572, 585–596, and 602–614; these read TVKM…LAVA, IANLFDKDYETV, and AGRE…SYTF. The TonB C-terminal box signature appears at 597 to 614; the sequence is YGYQTAGREYTLSGSYTF.

This sequence belongs to the TonB-dependent receptor family. BtuB (TC 1.B.14.3.1) subfamily.

Its subcellular location is the cell outer membrane. In terms of biological role, involved in the active translocation of vitamin B12 (cyanocobalamin) across the outer membrane to the periplasmic space. It derives its energy for transport by interacting with the trans-periplasmic membrane protein TonB. The chain is Vitamin B12 transporter BtuB from Shigella flexneri serotype 5b (strain 8401).